A 406-amino-acid chain; its full sequence is Cysteine desulfurase (406 aa).

Lys-226 is modified (N6-(pyridoxal phosphate)lysine). The active-site Cysteine persulfide intermediate is the Cys-364.

The protein belongs to the class-V pyridoxal-phosphate-dependent aminotransferase family. Csd subfamily. In terms of assembly, homodimer. Interacts with SufE and the SufBCD complex composed of SufB, SufC and SufD. The interaction with SufE is required to mediate the direct transfer of the sulfur atom from the S-sulfanylcysteine. Pyridoxal 5'-phosphate is required as a cofactor.

It localises to the cytoplasm. The enzyme catalyses (sulfur carrier)-H + L-cysteine = (sulfur carrier)-SH + L-alanine. The catalysed reaction is L-selenocysteine + AH2 = hydrogenselenide + L-alanine + A + H(+). Its pathway is cofactor biosynthesis; iron-sulfur cluster biosynthesis. In terms of biological role, cysteine desulfurases mobilize the sulfur from L-cysteine to yield L-alanine, an essential step in sulfur metabolism for biosynthesis of a variety of sulfur-containing biomolecules. Component of the suf operon, which is activated and required under specific conditions such as oxidative stress and iron limitation. Acts as a potent selenocysteine lyase in vitro, that mobilizes selenium from L-selenocysteine. Selenocysteine lyase activity is however unsure in vivo. In Escherichia fergusonii (strain ATCC 35469 / DSM 13698 / CCUG 18766 / IAM 14443 / JCM 21226 / LMG 7866 / NBRC 102419 / NCTC 12128 / CDC 0568-73), this protein is Cysteine desulfurase.